We begin with the raw amino-acid sequence, 410 residues long: Multidrug resistance protein MdtM (410 aa).

The Cytoplasmic segment spans residues 1–11; it reads MPRFFARHAAT. The chain crosses the membrane as a helical span at residues 12–32; sequence LFFPMALILYDFAAYLSTDLI. The Periplasmic segment spans residues 33 to 48; that stretch reads QPGIINVVRDFNADVS. The chain crosses the membrane as a helical span at residues 49–69; that stretch reads LAPAAVSLYLAGGMALQWLLG. At 70 to 78 the chain is on the cytoplasmic side; the sequence is PLSDRIGRK. A helical membrane pass occupies residues 79 to 99; sequence PVLITGALIFTLACAATMFTT. Residues 100 to 103 are Periplasmic-facing; the sequence is SMTQ. Residues 104–124 form a helical membrane-spanning segment; it reads FLIARAIQGTSICFIATVGYV. The Cytoplasmic portion of the chain corresponds to 125 to 140; sequence TVQEAFGQTKGIKLMA. A helical transmembrane segment spans residues 141–161; that stretch reads IITSIVLIAPIIGPLSGAALM. Topologically, residues 162-167 are periplasmic; it reads HFVHWK. A helical transmembrane segment spans residues 168-188; the sequence is VLFAIIAVMGFISFVGLLLAM. Topologically, residues 189-216 are cytoplasmic; the sequence is PETVKRGAVPFSAKSVLRDFRNVFCNRL. A helical membrane pass occupies residues 217–237; that stretch reads FLFGAATISLSYIPMMSWVAV. Residues 238–251 are Periplasmic-facing; it reads SPVILIDAGGLTTS. The chain crosses the membrane as a helical span at residues 252 to 272; the sequence is QFAWTQVPVFGAVIVANAIVA. Over 273-282 the chain is Cytoplasmic; that stretch reads RFVKDPTEPR. The chain crosses the membrane as a helical span at residues 283 to 303; the sequence is FIWRAVPIQLVGLALLIIGNL. At 304-307 the chain is on the periplasmic side; sequence LSPH. A helical transmembrane segment spans residues 308 to 328; the sequence is VWLWSVLGTSLYAFGIGLIFP. The Cytoplasmic portion of the chain corresponds to 329–348; the sequence is TLFRFTLFSNNLPKGTVSAS. A helical membrane pass occupies residues 349 to 369; that stretch reads LNMVILMVMSVSVEIGRWLWF. Topologically, residues 370 to 373 are periplasmic; it reads NGGR. A helical membrane pass occupies residues 374 to 394; that stretch reads LPFHLLAVVAGVIVVFTLAGL. Topologically, residues 395-410 are cytoplasmic; the sequence is LNRVRQHQAAELAEEQ.

Belongs to the major facilitator superfamily.

It localises to the cell inner membrane. Proton-dependent efflux pump. Confers resistance to a broad spectrum of chemically unrelated substrates. This is Multidrug resistance protein MdtM (mdtM) from Escherichia coli O157:H7.